A 401-amino-acid chain; its full sequence is Ribosomal protein uS12 methylthiotransferase RimO (401 aa).

The 108-residue stretch at 1–108 folds into the MTTase N-terminal domain; the sequence is MKINFINLGC…GIELLQTPKR (108 aa). [4Fe-4S] cluster contacts are provided by Cys10, Cys43, Cys72, Cys124, Cys128, and Cys131. The 230-residue stretch at 110 to 339 folds into the Radical SAM core domain; the sequence is LTTKHYAYLK…FNLSQEILEE (230 aa).

Belongs to the methylthiotransferase family. RimO subfamily. Requires [4Fe-4S] cluster as cofactor.

The protein localises to the cytoplasm. The catalysed reaction is L-aspartate(89)-[ribosomal protein uS12]-hydrogen + (sulfur carrier)-SH + AH2 + 2 S-adenosyl-L-methionine = 3-methylsulfanyl-L-aspartate(89)-[ribosomal protein uS12]-hydrogen + (sulfur carrier)-H + 5'-deoxyadenosine + L-methionine + A + S-adenosyl-L-homocysteine + 2 H(+). In terms of biological role, catalyzes the methylthiolation of an aspartic acid residue of ribosomal protein uS12. The sequence is that of Ribosomal protein uS12 methylthiotransferase RimO from Hydrogenobaculum sp. (strain Y04AAS1).